The sequence spans 587 residues: Protein NRT1/ PTR FAMILY 2.9 (587 aa).

The next 12 membrane-spanning stretches (helical) occupy residues 35-55 (FEKL…TTVF), 65-85 (VVNI…FLCD), 94-114 (LSFA…TAVI), 135-155 (IGQI…AGGI), 181-201 (FFNW…TLIV), 209-229 (WSIG…IFFA), 325-345 (CVIR…AYIQ), 368-388 (IPAG…IPIY), 412-432 (VGAG…VEQY), 457-477 (GMWL…AGVG), 493-513 (FAGS…TFLL), and 540-560 (YFYF…LLVS).

It belongs to the major facilitator superfamily. Proton-dependent oligopeptide transporter (POT/PTR) (TC 2.A.17) family. As to expression, expressed in roots, stems and major veins of the leaves. Detected in the companion cells of the root phloem.

The protein resides in the cell membrane. Its function is as follows. Low-affinity nitrate transporter facilitating nitrate loading into root phloem. Not involved in dipeptides transport, but has a weak glucosinolate transport activity. The chain is Protein NRT1/ PTR FAMILY 2.9 (NPF2.9) from Arabidopsis thaliana (Mouse-ear cress).